The chain runs to 533 residues: 1-aminocyclopropane-1-carboxylate synthase 5 (533 aa).

At Lys-358 the chain carries N6-(pyridoxal phosphate)lysine.

Belongs to the class-I pyridoxal-phosphate-dependent aminotransferase family. It depends on pyridoxal 5'-phosphate as a cofactor. As to expression, expressed in shoots and leaf blades. Expressed at low levels in leaf sheaths. Expressed in vasculature of roots and shoots.

The catalysed reaction is S-adenosyl-L-methionine = 1-aminocyclopropane-1-carboxylate + S-methyl-5'-thioadenosine + H(+). It functions in the pathway alkene biosynthesis; ethylene biosynthesis via S-adenosyl-L-methionine; ethylene from S-adenosyl-L-methionine: step 1/2. Functionally, catalyzes the formation of 1-aminocyclopropane-1-carboxylate, a direct precursor of ethylene in higher plants. This is 1-aminocyclopropane-1-carboxylate synthase 5 from Oryza sativa subsp. japonica (Rice).